The sequence spans 377 residues: MIEVVDGQRKLSECKRIVVKIGSSLLTANGQGLDLDAISHWAKQIADLHNAGHEIILVSSGAVAEGMVRMKLASRPTDLPSLQACAAIGQMGLIHTWSSVLENHSIRTAQVLLTHDDLADRRRYLNSCDALQNLIDWRVIPVINENDTVSTDEIRFGDNDTLAAMVAGQVHADLLIILTDQQGMFDSDPRHNPDAKLLSTVRAMDDVLFEMAGGGGVLGRGGMVTKVRAARLAAKSGCPTLIASGESDNVLSRVMAGEMLGTLFTTDKDRMTAHQQWLAAHLQTAGRLVIDDGAVEAIKLKHRSLLPVGVKTVEGHFDRGDVVECVDKQGKRVAVGRVNFSSRSAEIIKGLSSDKVYQVLGEARSLEMIHRDHMAIY.

Lys-20 is an ATP binding site. Residues Ser-60, Asp-147, and Asn-159 each contribute to the substrate site. Position 179–180 (179–180 (TD)) interacts with ATP. The 79-residue stretch at 285-363 (AGRLVIDDGA…DKVYQVLGEA (79 aa)) folds into the PUA domain.

Belongs to the glutamate 5-kinase family.

It is found in the cytoplasm. The enzyme catalyses L-glutamate + ATP = L-glutamyl 5-phosphate + ADP. The protein operates within amino-acid biosynthesis; L-proline biosynthesis; L-glutamate 5-semialdehyde from L-glutamate: step 1/2. Catalyzes the transfer of a phosphate group to glutamate to form L-glutamate 5-phosphate. The protein is Glutamate 5-kinase of Acinetobacter baumannii (strain AB307-0294).